An 86-amino-acid chain; its full sequence is Gas vesicle protein A1 (86 aa).

The protein belongs to the gas vesicle GvpA family. The gas vesicle shell is 2 nm thick and consists of a single layer of this protein. It forms helical ribs nearly perpendicular to the long axis of the vesicle.

The protein resides in the gas vesicle shell. In terms of biological role, gas vesicles are hollow, gas filled proteinaceous nanostructures found in some microorganisms. During planktonic growth they allow positioning of the organism at a favorable depth for light or nutrient acquisition. GvpA forms the protein shell. Functionally, it is not clear if the 2 type A proteins in this organism are functionally redundant. When the full gvp locus (gvpA1-gvpP-gvpQ-gvpA2-gvpR-gvpN-gvpF-gvpG-gvpL-gvpS-gvpK-gvpJ-gvpT-gvpU, called pNL26) is expressed in E.coli gas vesicles are made. This chain is Gas vesicle protein A1, found in Priestia megaterium (Bacillus megaterium).